The primary structure comprises 485 residues: Proline--tRNA ligase (485 aa).

It belongs to the class-II aminoacyl-tRNA synthetase family. ProS type 3 subfamily. In terms of assembly, homodimer.

It is found in the cytoplasm. The catalysed reaction is tRNA(Pro) + L-proline + ATP = L-prolyl-tRNA(Pro) + AMP + diphosphate. Its function is as follows. Catalyzes the attachment of proline to tRNA(Pro) in a two-step reaction: proline is first activated by ATP to form Pro-AMP and then transferred to the acceptor end of tRNA(Pro). This is Proline--tRNA ligase from Aeropyrum pernix (strain ATCC 700893 / DSM 11879 / JCM 9820 / NBRC 100138 / K1).